The following is a 473-amino-acid chain: MAVKKYSAGVKEYRQTYWMPEYTPLDSDILACFKITPQPGVDREEAAAAVAAESSTGTWTTVWTDLLTDMDYYKGRAYRIEDVPGDDAAFYAFIAYPIDLFEEGSVVNVFTSLVGNVFGFKAVRGLRLEDVRFPLAYVKTCGGPPHGIQVERDKMNKYGRPLLGCTIKPKLGLSAKNYGRAVYECLRGGLDFTKDDENINSQPFMRWRDRFLFVQDATETAEAQTGERKGHYLNVTAPTPEEMYKRAEFAKEIGAPIIMHDYITGGFTANTGLAKWCQDNGVLLHIHRAMHAVIDRNPNHGIHFRVLTKILRLSGGDHLHTGTVVGKLEGDRASTLGWIDLLRESFIPEDRSRGIFFDQDWGSMPGVFAVASGGIHVWHMPALVNIFGDDSVLQFGGGTLGHPWGNAAGAAANRVALEACVEARNQGRDIEKEGKEILTAAAQHSPELKIAMETWKEIKFEFDTVDKLDTQNR.

The necessary and sufficient to target proteins to carboxysomes, interacts with shell proteins stretch occupies residues methionine 1–alanine 136. Positions 116 and 166 each coordinate substrate. The active-site Proton acceptor is lysine 168. Position 170 (lysine 170) interacts with substrate. Mg(2+) contacts are provided by lysine 194, aspartate 196, and glutamate 197. An N6-carboxylysine modification is found at lysine 194. The Proton acceptor role is filled by histidine 287. Substrate-binding residues include arginine 288, histidine 320, and serine 372.

The protein belongs to the RuBisCO large chain family. Type I subfamily. Heterohexadecamer of 8 large chains and 8 small chains. Forms a CsoS2-CsoS1-RuBisCO complex. The N-terminus (residues 1-136) interacts with shell proteins CsoS1A, CsoS1B and CsoS1C. Holo-RuBisCO interacts with the N-terminal repeats of CsoS2; binding is sensitive to ionic strength. A fusion of a single N-terminal repeat to the C-terminus of the large subunit of RuBisCO (cbbL) shows the repeat can lie between a CbbL dimer, making minor contacts to CbbS; thus each RuBisCO holoenzyme could bind 8 repeats. Mg(2+) serves as cofactor.

The protein resides in the carboxysome. The catalysed reaction is 2 (2R)-3-phosphoglycerate + 2 H(+) = D-ribulose 1,5-bisphosphate + CO2 + H2O. It catalyses the reaction D-ribulose 1,5-bisphosphate + O2 = 2-phosphoglycolate + (2R)-3-phosphoglycerate + 2 H(+). Its function is as follows. RuBisCO catalyzes two reactions: the carboxylation of D-ribulose 1,5-bisphosphate, the primary event in carbon dioxide fixation, as well as the oxidative fragmentation of the pentose substrate. Both reactions occur simultaneously and in competition at the same active site. There are estimated to be 270 RuBisCO heterohexadecamers per carboxysome. Alpha-carboxysomes are able to assemble in the absence of RuBisCO, unlike beta-carboxysomes. The RuBisCO large subunit is required for enzyme integration into carboxysomes; replacing it with the carboxysomally targeted gene (Tcr_0838, AC Q31HD9) of H.crungenus places RuBisCO in the carboxysome, while the non-carboxysomal large subunit of H.crungenus (Tcr_0427, AC Q31IK0) is not incorporated in the carboxysome. This is Ribulose bisphosphate carboxylase large chain from Halothiobacillus neapolitanus (strain ATCC 23641 / c2) (Thiobacillus neapolitanus).